Here is a 445-residue protein sequence, read N- to C-terminus: ATP-dependent protease ATPase subunit HslU (445 aa).

ATP-binding positions include Ile-17, Gly-59–Glu-64, Asp-254, Glu-319, and Arg-391.

The protein belongs to the ClpX chaperone family. HslU subfamily. As to quaternary structure, a double ring-shaped homohexamer of HslV is capped on each side by a ring-shaped HslU homohexamer. The assembly of the HslU/HslV complex is dependent on binding of ATP.

It localises to the cytoplasm. ATPase subunit of a proteasome-like degradation complex; this subunit has chaperone activity. The binding of ATP and its subsequent hydrolysis by HslU are essential for unfolding of protein substrates subsequently hydrolyzed by HslV. HslU recognizes the N-terminal part of its protein substrates and unfolds these before they are guided to HslV for hydrolysis. The chain is ATP-dependent protease ATPase subunit HslU from Pseudomonas savastanoi pv. phaseolicola (strain 1448A / Race 6) (Pseudomonas syringae pv. phaseolicola (strain 1448A / Race 6)).